The chain runs to 164 residues: Phosphopantetheine adenylyltransferase (164 aa).

Ser-9 lines the substrate pocket. ATP contacts are provided by residues 9–10 and His-17; that span reads SF. The substrate site is built by Lys-41, Leu-73, and Lys-87. ATP-binding positions include 88 to 90, Glu-98, and 123 to 129; these read GLR and YSYISSS.

The protein belongs to the bacterial CoaD family. Homohexamer. Mg(2+) serves as cofactor.

Its subcellular location is the cytoplasm. It carries out the reaction (R)-4'-phosphopantetheine + ATP + H(+) = 3'-dephospho-CoA + diphosphate. Its pathway is cofactor biosynthesis; coenzyme A biosynthesis; CoA from (R)-pantothenate: step 4/5. In terms of biological role, reversibly transfers an adenylyl group from ATP to 4'-phosphopantetheine, yielding dephospho-CoA (dPCoA) and pyrophosphate. The protein is Phosphopantetheine adenylyltransferase of Clostridium perfringens (strain SM101 / Type A).